The sequence spans 344 residues: Phenylalanine--tRNA ligase alpha subunit (344 aa).

E257 contributes to the Mg(2+) binding site.

This sequence belongs to the class-II aminoacyl-tRNA synthetase family. Phe-tRNA synthetase alpha subunit type 1 subfamily. In terms of assembly, tetramer of two alpha and two beta subunits. The cofactor is Mg(2+).

The protein resides in the cytoplasm. The catalysed reaction is tRNA(Phe) + L-phenylalanine + ATP = L-phenylalanyl-tRNA(Phe) + AMP + diphosphate + H(+). The polypeptide is Phenylalanine--tRNA ligase alpha subunit (Chlorobium chlorochromatii (strain CaD3)).